Here is a 568-residue protein sequence, read N- to C-terminus: Cytochrome P450 monooxygenase 41 (568 aa).

A helical transmembrane segment spans residues 21-41 (LTSLVPLILSVMVCLIATVTI). Residues Asn321 and Asn377 are each glycosylated (N-linked (GlcNAc...) asparagine). Cys514 lines the heme pocket.

Belongs to the cytochrome P450 family. The cofactor is heme.

It is found in the membrane. The protein operates within secondary metabolite biosynthesis. Cytochrome P450 monooxygenase that is able to use 3,5-dimethoxy-trans-stilbene and 3,5,4'-trimethoxy-trans-stilbene as substrates for oxidation. In Postia placenta (strain ATCC 44394 / Madison 698-R) (Brown rot fungus), this protein is Cytochrome P450 monooxygenase 41.